The sequence spans 74 residues: Tetrahydromethanopterin S-methyltransferase subunit G (74 aa).

Residues 47 to 67 form a helical membrane-spanning segment; the sequence is VGIAYGLAIGFIFVYVLGTVL.

It belongs to the MtrG family. The complex is composed of 8 subunits; MtrA, MtrB, MtrC, MtrD, MtrE, MtrF, MtrG and MtrH.

It is found in the cell membrane. It catalyses the reaction 5-methyl-5,6,7,8-tetrahydromethanopterin + coenzyme M + 2 Na(+)(in) = 5,6,7,8-tetrahydromethanopterin + methyl-coenzyme M + 2 Na(+)(out). It functions in the pathway one-carbon metabolism; methanogenesis from CO(2); methyl-coenzyme M from 5,10-methylene-5,6,7,8-tetrahydromethanopterin: step 2/2. In terms of biological role, part of a complex that catalyzes the formation of methyl-coenzyme M and tetrahydromethanopterin from coenzyme M and methyl-tetrahydromethanopterin. This is an energy-conserving, sodium-ion translocating step. In Methanococcus maripaludis (strain DSM 14266 / JCM 13030 / NBRC 101832 / S2 / LL), this protein is Tetrahydromethanopterin S-methyltransferase subunit G.